Here is a 274-residue protein sequence, read N- to C-terminus: Rhamnulose-1-phosphate aldolase (274 aa).

Residue E117 is part of the active site. The Zn(2+) site is built by H141, H143, and H212.

The protein belongs to the aldolase class II family. RhaD subfamily. As to quaternary structure, homotetramer. The cofactor is Zn(2+).

It is found in the cytoplasm. It catalyses the reaction L-rhamnulose 1-phosphate = (S)-lactaldehyde + dihydroxyacetone phosphate. The protein operates within carbohydrate degradation; L-rhamnose degradation; glycerone phosphate from L-rhamnose: step 3/3. In terms of biological role, catalyzes the reversible cleavage of L-rhamnulose-1-phosphate to dihydroxyacetone phosphate (DHAP) and L-lactaldehyde. The protein is Rhamnulose-1-phosphate aldolase of Escherichia coli O157:H7.